The sequence spans 353 residues: Protein O-mannose kinase (353 aa).

At 1 to 19 (MEKKAHFVKRDFPPREAPS) the chain is on the cytoplasmic side. A helical; Signal-anchor for type II membrane protein transmembrane segment spans residues 20 to 40 (LLLLLLVVAVLLLNALLYLYL). Topologically, residues 41-353 (GNLHGSSGRA…AAMPSTREML (313 aa)) are lumenal. Positions 83–353 (VRKLKCVGEG…AAMPSTREML (271 aa)) constitute a Protein kinase domain. N163 and N237 each carry an N-linked (GlcNAc...) asparagine glycan.

It belongs to the protein kinase superfamily. Ser/Thr protein kinase family. STKL subfamily.

It localises to the endoplasmic reticulum membrane. It carries out the reaction 3-O-[beta-D-GalNAc-(1-&gt;3)-beta-D-GlcNAc-(1-&gt;4)-alpha-D-Man]-L-Thr-[protein] + ATP = 3-O-[beta-D-GalNAc-(1-&gt;3)-beta-D-GlcNAc-(1-&gt;4)-(O-6-P-alpha-D-Man)]-Thr-[protein] + ADP + H(+). In terms of biological role, protein O-mannose kinase that specifically mediates phosphorylation at the 6-position of an O-mannose of the trisaccharide (N-acetylgalactosamine (GalNAc)-beta-1,3-N-acetylglucosamine (GlcNAc)-beta-1,4-mannose) to generate phosphorylated O-mannosyl trisaccharide (N-acetylgalactosamine-beta-1,3-N-acetylglucosamine-beta-1,4-(phosphate-6-)mannose). Phosphorylated O-mannosyl trisaccharide is a carbohydrate structure present in alpha-dystroglycan (DAG1), which is required for binding laminin G-like domain-containing extracellular proteins with high affinity. Only shows kinase activity when the GalNAc-beta-3-GlcNAc-beta-terminus is linked to the 4-position of O-mannose, suggesting that this disaccharide serves as the substrate recognition motif. The protein is Protein O-mannose kinase (POMK) of Gallus gallus (Chicken).